The sequence spans 255 residues: Probable transcriptional regulator ycf27 (255 aa).

The region spanning 9–122 is the Response regulatory domain; sequence KILIADDESS…ELEARIRCVL (114 aa). Asp58 is modified (4-aspartylphosphate). Positions 78–96 form a DNA-binding region, H-T-H motif; it reads DIPIIMLTALGDVTDRITG. Positions 137-238 form a DNA-binding region, ompR/PhoB-type; the sequence is SGIINIGFLK…SRGTGYLFQR (102 aa).

It localises to the plastid. Its subcellular location is the chloroplast. Its function is as follows. Probable promoter-specific protein mediating the interaction between DNA and RNA polymerase. In Galdieria sulphuraria (Red alga), this protein is Probable transcriptional regulator ycf27 (ycf27).